The primary structure comprises 78 residues: UPF0248 protein Msed_0897 (78 aa).

It belongs to the UPF0248 family.

The protein is UPF0248 protein Msed_0897 of Metallosphaera sedula (strain ATCC 51363 / DSM 5348 / JCM 9185 / NBRC 15509 / TH2).